Here is a 656-residue protein sequence, read N- to C-terminus: Nexilin (656 aa).

3 disordered regions span residues 1–131, 165–198, and 215–284; these read MNDV…IEQD, RAAANRKDPEDLDREHRNGRVSQEEEKTRHEEEC, and TEAK…VFKE. A compositionally biased stretch (low complexity) spans 11-26; sequence LLSSSKPVPKSYVPKL. Over residues 27 to 78 the composition is skewed to basic and acidic residues; that stretch reads GKGDVKDKFEAMQRAREERNQRRSRDEKQRRKEQYIREREWNRRKQEIKDML. The residue at position 80 (serine 80) is a Phosphoserine. Composition is skewed to basic and acidic residues over residues 103–131, 169–198, and 216–269; these read GKFDEMEKHRQEEQRKRTEEERKRRIEQD, NRKDPEDLDREHRNGRVSQEEEKTRHEEEC, and EAKK…RNMV. Phosphoserine is present on residues serine 221, serine 330, serine 337, and serine 345. Position 350 is a phosphothreonine (threonine 350). Disordered stretches follow at residues 468–492 and 529–564; these read NFHEDDDVDVKPAKKSESPFTHKVN and AALQKKREDDEEEEGSIVNGSTTEDEEQTRSGAPWF. 2 positions are modified to phosphoserine: serine 544 and serine 549. Threonine 551 is subject to Phosphothreonine. The Ig-like domain occupies 562–650; that stretch reads PWFKKPLRNT…GSAASTCILT (89 aa).

In terms of assembly, interacts with F-actin. Expressed in brain, testis, spleen and fibroblasts (at protein level). Not detected in liver, kidney or epithelial cells (at protein level).

Its subcellular location is the cytoplasm. The protein resides in the cytoskeleton. The protein localises to the cell junction. It is found in the adherens junction. It localises to the myofibril. Its subcellular location is the sarcomere. The protein resides in the z line. In terms of biological role, involved in regulating cell migration through association with the actin cytoskeleton. Has an essential role in the maintenance of Z line and sarcomere integrity. This Rattus norvegicus (Rat) protein is Nexilin.